The primary structure comprises 715 residues: Discoidin, CUB and LCCL domain-containing protein 1 (715 aa).

An N-terminal signal peptide occupies residues 1–34 (MVPGARGGGALARAAGRGLLALLLAVSAPLRLQA). The Extracellular segment spans residues 35 to 459 (EELGDGCGHL…TSTGINITTV (425 aa)). 2 cysteine pairs are disulfide-bonded: Cys41/Cys68 and Cys94/Cys112. The 110-residue stretch at 41–150 (CGHLVTYQDS…RGFLLTYASS (110 aa)) folds into the CUB domain. Asn64 carries an N-linked (GlcNAc...) asparagine glycan. N-linked (GlcNAc...) asparagine glycosylation is present at Asn124. The LCCL domain occupies 152–248 (HPDLITCLER…RDGSLSDKRF (97 aa)). 2 disulfides stabilise this stretch: Cys158-Cys174 and Cys178-Cys200. One can recognise an F5/8 type C domain in the interval 248-412 (FLFTSNGCSR…IALKVELIGC (165 aa)). Asn277 carries N-linked (GlcNAc...) asparagine glycosylation. Residues 278–312 (ESGDQVHWSPGQARLQDQGPSWASGDSSNNHKPRE) form a disordered region. The span at 295 to 307 (QGPSWASGDSSNN) shows a compositional bias: polar residues. Residues Asn351, Asn418, and Asn455 are each glycosylated (N-linked (GlcNAc...) asparagine). Residues 460 to 480 (AIPLVLLVVLVFAGMGIFAAF) form a helical membrane-spanning segment. Topologically, residues 481–715 (RKKKKKGSPY…LNQTAMTALL (235 aa)) are cytoplasmic. Ser513 carries the phosphoserine modification. The residue at position 614 (Thr614) is a Phosphothreonine. A disordered region spans residues 619 to 702 (SGYRVPGPQP…SDSYSAPRDC (84 aa)).

It is found in the membrane. The polypeptide is Discoidin, CUB and LCCL domain-containing protein 1 (DCBLD1) (Homo sapiens (Human)).